Here is a 284-residue protein sequence, read N- to C-terminus: Trimeric intracellular cation channel type B (284 aa).

Residues methionine 1–serine 15 lie on the Lumenal side of the membrane. A helical transmembrane segment spans residues methionine 16 to alanine 32. Topologically, residues arginine 33 to arginine 44 are cytoplasmic. The chain crosses the membrane as a helical span at residues serine 45–leucine 68. Over alanine 69 to threonine 79 the chain is Lumenal. The chain crosses the membrane as a helical span at residues threonine 80 to leucine 99. Over phenylalanine 100–asparagine 102 the chain is Cytoplasmic. A helical transmembrane segment spans residues cysteine 103–arginine 121. Residues lysine 117 and arginine 121 each coordinate a 1,2-diacyl-sn-glycero-3-phospho-(1D-myo-inositol-4,5-bisphosphate). The Lumenal portion of the chain corresponds to threonine 122–alanine 139. A helical membrane pass occupies residues methionine 140–isoleucine 157. Topologically, residues serine 158–methionine 178 are cytoplasmic. The helical transmembrane segment at serine 179–histidine 196 threads the bilayer. Residues glycine 197 to arginine 204 lie on the Lumenal side of the membrane. A helical membrane pass occupies residues histidine 205–threonine 225. Residues arginine 226 to asparagine 284 lie on the Cytoplasmic side of the membrane. The tract at residues proline 250–asparagine 284 is disordered. The segment covering aspartate 262–asparagine 284 has biased composition (basic and acidic residues).

Belongs to the TMEM38 family. Homotrimer; conformation seems to be controled by binding to diacylglycerol (DAG).

Its subcellular location is the endoplasmic reticulum membrane. The catalysed reaction is K(+)(in) = K(+)(out). With respect to regulation, channel activity is activated by increased cytosolic Ca(2+) levels and blocked by luminal high Ca(2+) levels. Its function is as follows. Intracellular monovalent cation channel required for maintenance of rapid intracellular calcium release. Acts as a potassium counter-ion channel that functions in synchronization with calcium release from intracellular stores. Activated by increased cytosolic Ca(2+) levels. In Xenopus tropicalis (Western clawed frog), this protein is Trimeric intracellular cation channel type B (tmem38b).